A 210-amino-acid chain; its full sequence is DNA replication complex GINS protein PSF3 (210 aa).

This sequence belongs to the GINS3/PSF3 family. In terms of assembly, component of the GINS complex which is a heterotetramer of gins1/psf1, gins2/psf2, gins3/psf3 and gins4/sld5. Component of the CMG helicase complex, composed of the mcm2-7 complex, the GINS complex and cdc45.

It localises to the nucleus. Its subcellular location is the chromosome. Its function is as follows. Required for correct functioning of the GINS complex, a complex that plays an essential role in the initiation of DNA replication, and progression of DNA replication forks. GINS complex is a core component of CDC45-MCM-GINS (CMG) helicase, the molecular machine that unwinds template DNA during replication, and around which the replisome is built. The sequence is that of DNA replication complex GINS protein PSF3 from Xenopus laevis (African clawed frog).